Reading from the N-terminus, the 266-residue chain is Gasdermin bGSDM (266 aa).

A run of 4 beta stranded transmembrane segments spans residues 67-83, 95-113, 162-179, and 187-203; these read LQQN…GVDI, KLRG…ISYQ, SFSV…DLEA, and ADVN…LMEY.

This sequence belongs to the bacterial gasdermin family. As to quaternary structure, monomer. In terms of assembly, forms large, homooligomeric ring-shaped pores when inserted in membranes.

It localises to the cytoplasm. The protein resides in the cell inner membrane. The full-length protein before cleavage is inactive: intramolecular interactions between the N-terminal domain and the C-terminal region mediate autoinhibition. The pyroptosis-like-inducing activity is carried by the released N-terminal domain (Gasdermin bGSDM, N-terminus). Its function is as follows. Precursor of a pore-forming protein involved in defense against bacteriophages. Expression of bGSDM and the neighboring protease gene (Gilli_2517) is not toxic in E.coli. Cleavage of this precursor by its dedicated protease releases the active moiety (gasdermin bGSDM, N-terminus) which inserts into membranes, forming pores and triggering cell death. Pore-forming protein that causes membrane permeabilization via a pyroptosis-like activity. Makes ring-like pores when released. This chain is Gasdermin bGSDM, found in Gillisia limnaea (strain DSM 15749 / LMG 21470 / R-8282).